The following is a 251-amino-acid chain: tRNA pseudouridine synthase A (251 aa).

The active-site Nucleophile is the Asp26. Substrate is bound at residue Tyr98.

Belongs to the tRNA pseudouridine synthase TruA family. As to quaternary structure, homodimer.

It carries out the reaction uridine(38/39/40) in tRNA = pseudouridine(38/39/40) in tRNA. Its function is as follows. Formation of pseudouridine at positions 38, 39 and 40 in the anticodon stem and loop of transfer RNAs. The sequence is that of tRNA pseudouridine synthase A from Mycolicibacterium paratuberculosis (strain ATCC BAA-968 / K-10) (Mycobacterium paratuberculosis).